The sequence spans 432 residues: Tol-Pal system protein TolB (432 aa).

Residues 1 to 29 (MMRNVWKSGLRRSAWIGLLMVLCVGVARA) form the signal peptide.

It belongs to the TolB family. As to quaternary structure, the Tol-Pal system is composed of five core proteins: the inner membrane proteins TolA, TolQ and TolR, the periplasmic protein TolB and the outer membrane protein Pal. They form a network linking the inner and outer membranes and the peptidoglycan layer.

The protein localises to the periplasm. In terms of biological role, part of the Tol-Pal system, which plays a role in outer membrane invagination during cell division and is important for maintaining outer membrane integrity. In Ralstonia nicotianae (strain ATCC BAA-1114 / GMI1000) (Ralstonia solanacearum), this protein is Tol-Pal system protein TolB.